Consider the following 298-residue polypeptide: Aspartate carbamoyltransferase catalytic subunit (298 aa).

Carbamoyl phosphate contacts are provided by Arg50 and Thr51. Lys79 provides a ligand contact to L-aspartate. Carbamoyl phosphate-binding residues include Arg100, His128, and Gln131. Residues Arg160 and Arg221 each coordinate L-aspartate. Positions 260 and 261 each coordinate carbamoyl phosphate.

Belongs to the aspartate/ornithine carbamoyltransferase superfamily. ATCase family. In terms of assembly, heterooligomer of catalytic and regulatory chains.

It carries out the reaction carbamoyl phosphate + L-aspartate = N-carbamoyl-L-aspartate + phosphate + H(+). Its pathway is pyrimidine metabolism; UMP biosynthesis via de novo pathway; (S)-dihydroorotate from bicarbonate: step 2/3. In terms of biological role, catalyzes the condensation of carbamoyl phosphate and aspartate to form carbamoyl aspartate and inorganic phosphate, the committed step in the de novo pyrimidine nucleotide biosynthesis pathway. The chain is Aspartate carbamoyltransferase catalytic subunit from Methanospirillum hungatei JF-1 (strain ATCC 27890 / DSM 864 / NBRC 100397 / JF-1).